We begin with the raw amino-acid sequence, 360 residues long: Tryptophan--tRNA ligase, mitochondrial (360 aa).

The transit peptide at 1–18 (MALHSMRKARERWSFIRA) directs the protein to the mitochondrion. Residues Gln42 and 48–51 (HLGN) each bind ATP. Asp167 is an L-tryptophan binding site. ATP-binding positions include 179 to 181 (GED), Val217, and 226 to 230 (KMSKS).

The protein belongs to the class-I aminoacyl-tRNA synthetase family. As to expression, brain.

The protein localises to the mitochondrion matrix. Its subcellular location is the mitochondrion. It carries out the reaction tRNA(Trp) + L-tryptophan + ATP = L-tryptophyl-tRNA(Trp) + AMP + diphosphate + H(+). Catalyzes the attachment of tryptophan to tRNA(Trp) in a two-step reaction: tryptophan is first activated by ATP to form Trp-AMP and then transferred to the acceptor end of tRNA(Trp). This Homo sapiens (Human) protein is Tryptophan--tRNA ligase, mitochondrial (WARS2).